Here is a 218-residue protein sequence, read N- to C-terminus: Interleukin-37 (218 aa).

A disordered region spans residues 1–40 (MSFVGENSGVKMGSEDWEKDEPQCCLEDPAGSPLEPGPSL). Positions 1–45 (MSFVGENSGVKMGSEDWEKDEPQCCLEDPAGSPLEPGPSLPTMNF) are cleaved as a propeptide — removed in mature form. The span at 13–22 (GSEDWEKDEP) shows a compositional bias: basic and acidic residues.

It belongs to the IL-1 family. Interacts with SMAD3. Binds IL18R1, but not to IL1R1, with lower affinity than IL18, and does not seem to act as a receptor antagonist for IL18. Interacts with cargo receptor TMED10; the interaction mediates the translocation from the cytoplasm into the ERGIC (endoplasmic reticulum-Golgi intermediate compartment) and thereby secretion. In terms of processing, proteolytically converted to the mature form by CASP1. In general, low constitutive expression, if any, in healthy tissues; high expression in inflammatory counterparts, including in synovial tissues from individuals with active rheumatoid arthritis. Isoform A, isoform B and isoform C are expressed in testis, colon, placenta, lung and lymph node. Isoform D and isoform E were found only in testis and bone marrow. Whereas only isoform A is found in brain, only isoform B in kidney and only isoform C in heart.

It localises to the cytoplasm. The protein resides in the cytosol. The protein localises to the nucleus. Its subcellular location is the secreted. Functionally, immune regulatory cytokine that acts as a suppressor of innate inflammatory and immune responses involved in curbing excessive inflammation. Signaling can occur via two mechanisms, intracellularly through nuclear translocation with SMAD3 and extracellularly after secretion and binding to its receptor composed of IL18R1 and IL18RAP. Suppresses, or reduces, pro-inflammatory cytokine production, including IL1A and IL6, as well as CCL12, CSF1, CSF2, CXCL13, IL1B, IL23A and IL1RN, but spares anti-inflammatory cytokines. Inhibits dendritic cell activation. In Homo sapiens (Human), this protein is Interleukin-37.